The chain runs to 404 residues: F-box protein At3g57590 (404 aa).

One can recognise an F-box domain in the interval 1 to 47; sequence MEPIPNDLILEIFSRLPAKSVIGFRTLSKHWASILRSPVFTELFLTR.

The protein is F-box protein At3g57590 of Arabidopsis thaliana (Mouse-ear cress).